A 269-amino-acid polypeptide reads, in one-letter code: Tryptophan synthase alpha chain (269 aa).

Active-site proton acceptor residues include E50 and D61.

This sequence belongs to the TrpA family. As to quaternary structure, tetramer of two alpha and two beta chains.

The catalysed reaction is (1S,2R)-1-C-(indol-3-yl)glycerol 3-phosphate + L-serine = D-glyceraldehyde 3-phosphate + L-tryptophan + H2O. It participates in amino-acid biosynthesis; L-tryptophan biosynthesis; L-tryptophan from chorismate: step 5/5. Its function is as follows. The alpha subunit is responsible for the aldol cleavage of indoleglycerol phosphate to indole and glyceraldehyde 3-phosphate. This Francisella tularensis subsp. holarctica (strain FTNF002-00 / FTA) protein is Tryptophan synthase alpha chain.